We begin with the raw amino-acid sequence, 417 residues long: D-amino acid dehydrogenase (417 aa).

3-17 (VIVLGSGVIGVTAAW) contributes to the FAD binding site.

This sequence belongs to the DadA oxidoreductase family. Requires FAD as cofactor.

It carries out the reaction a D-alpha-amino acid + A + H2O = a 2-oxocarboxylate + AH2 + NH4(+). The protein operates within amino-acid degradation; D-alanine degradation; NH(3) and pyruvate from D-alanine: step 1/1. Functionally, oxidative deamination of D-amino acids. The protein is D-amino acid dehydrogenase of Methylobacillus flagellatus (strain ATCC 51484 / DSM 6875 / VKM B-1610 / KT).